Here is a 359-residue protein sequence, read N- to C-terminus: GTP 3',8-cyclase 1 (359 aa).

Residues 21–241 form the Radical SAM core domain; sequence RCRRMMGDLR…SLEKRYGRIE (221 aa). Arginine 30 contacts GTP. The [4Fe-4S] cluster site is built by cysteine 37 and cysteine 41. S-adenosyl-L-methionine is bound at residue tyrosine 43. Position 44 (cysteine 44) interacts with [4Fe-4S] cluster. Residue arginine 80 coordinates GTP. Glycine 84 contacts S-adenosyl-L-methionine. Threonine 115 contacts GTP. Serine 139 is an S-adenosyl-L-methionine binding site. A GTP-binding site is contributed by lysine 176. Methionine 210 is an S-adenosyl-L-methionine binding site. The [4Fe-4S] cluster site is built by cysteine 273 and cysteine 276. GTP is bound at residue 278 to 280; it reads RSR. Position 290 (cysteine 290) interacts with [4Fe-4S] cluster.

This sequence belongs to the radical SAM superfamily. MoaA family. Monomer and homodimer. The cofactor is [4Fe-4S] cluster.

It catalyses the reaction GTP + AH2 + S-adenosyl-L-methionine = (8S)-3',8-cyclo-7,8-dihydroguanosine 5'-triphosphate + 5'-deoxyadenosine + L-methionine + A + H(+). The protein operates within cofactor biosynthesis; molybdopterin biosynthesis. Functionally, catalyzes the cyclization of GTP to (8S)-3',8-cyclo-7,8-dihydroguanosine 5'-triphosphate. This Mycobacterium tuberculosis (strain CDC 1551 / Oshkosh) protein is GTP 3',8-cyclase 1.